Reading from the N-terminus, the 349-residue chain is N-acetyl-gamma-glutamyl-phosphate reductase (349 aa).

The active site involves Cys-153.

The protein belongs to the NAGSA dehydrogenase family. Type 1 subfamily.

It localises to the cytoplasm. It catalyses the reaction N-acetyl-L-glutamate 5-semialdehyde + phosphate + NADP(+) = N-acetyl-L-glutamyl 5-phosphate + NADPH + H(+). The protein operates within amino-acid biosynthesis; L-arginine biosynthesis; N(2)-acetyl-L-ornithine from L-glutamate: step 3/4. Catalyzes the NADPH-dependent reduction of N-acetyl-5-glutamyl phosphate to yield N-acetyl-L-glutamate 5-semialdehyde. In Magnetococcus marinus (strain ATCC BAA-1437 / JCM 17883 / MC-1), this protein is N-acetyl-gamma-glutamyl-phosphate reductase.